The following is an 82-amino-acid chain: Conotoxin Tx6.6 (82 aa).

The first 19 residues, 1-19, serve as a signal peptide directing secretion; that stretch reads MKLTCVMIVAVLFLTAWTL. Positions 20-51 are excised as a propeptide; sequence VMADDSNNGLANLFSKLRDEMEDPEGSKLEKK. 3 disulfides stabilise this stretch: cysteine 53–cysteine 71, cysteine 60–cysteine 76, and cysteine 70–cysteine 81. Position 82 is an alanine amide; partial (alanine 82).

Belongs to the O1 superfamily. As to expression, expressed by the venom duct.

It localises to the secreted. In terms of biological role, omega-conotoxins act at presynaptic membranes, they bind and block voltage-gated calcium channels (Cav). This is Conotoxin Tx6.6 from Conus textile (Cloth-of-gold cone).